The following is a 148-amino-acid chain: Aspartate carbamoyltransferase regulatory chain (148 aa).

Zn(2+) is bound by residues cysteine 106, cysteine 111, cysteine 134, and cysteine 137.

It belongs to the PyrI family. Contains catalytic and regulatory chains. Requires Zn(2+) as cofactor.

Its function is as follows. Involved in allosteric regulation of aspartate carbamoyltransferase. The polypeptide is Aspartate carbamoyltransferase regulatory chain (Methanococcus vannielii (strain ATCC 35089 / DSM 1224 / JCM 13029 / OCM 148 / SB)).